A 177-amino-acid polypeptide reads, in one-letter code: Large ribosomal subunit protein uL6 (177 aa).

The protein belongs to the universal ribosomal protein uL6 family. Part of the 50S ribosomal subunit.

Functionally, this protein binds to the 23S rRNA, and is important in its secondary structure. It is located near the subunit interface in the base of the L7/L12 stalk, and near the tRNA binding site of the peptidyltransferase center. In Psychrobacter arcticus (strain DSM 17307 / VKM B-2377 / 273-4), this protein is Large ribosomal subunit protein uL6.